Consider the following 34-residue polypeptide: QKVVGIDLGTTNSAVAAMEGGKPTIVTNAEGQRT.

It belongs to the heat shock protein 70 family.

Its subcellular location is the plastid. It localises to the chloroplast stroma. Interacts with newly imported chloroplast proteins to assist in their maturation. The polypeptide is Stromal 70 kDa heat shock-related protein, chloroplastic (Cucurbita maxima (Pumpkin)).